We begin with the raw amino-acid sequence, 284 residues long: Homeobox protein SIX1 (284 aa).

Positions 124–183 (GEETSYCFKEKSRGVLREWYAHNPYPSPREKRELAEATGLTTTQVSNWFKNRRQRDRAAE) form a DNA-binding region, homeobox. The interval 168–271 (VSNWFKNRRQ…AHQHQLQDSL (104 aa)) is disordered. A compositionally biased stretch (basic and acidic residues) spans 179 to 190 (DRAAEAKERENT). Over residues 242–271 (RSSNYSLPGLTASQPSHGLQAHQHQLQDSL) the composition is skewed to polar residues.

The protein belongs to the SIX/Sine oculis homeobox family. In terms of assembly, interacts with DACH1. Interacts with EYA1. Interacts with EYA2. Interacts with CDH1. Interacts with TBX18. Interacts with CEBPA. Interacts with CEBPB. Interacts with EBF2. Post-translationally, phosphorylated during interphase; becomes hyperphosphorylated during mitosis. Hyperphosphorylation impairs binding to promoter elements. Ubiquitinated by the anaphase promoting complex (APC), leading to its proteasomal degradation.

It localises to the nucleus. The protein localises to the cytoplasm. Functionally, transcription factor that is involved in the regulation of cell proliferation, apoptosis and embryonic development. Plays an important role in the development of several organs, including kidney, muscle and inner ear. Depending on context, functions as a transcriptional repressor or activator. Lacks an activation domain, and requires interaction with EYA family members for transcription activation. Mediates nuclear translocation of EYA1 and EYA2. Binds the 5'-TCA[AG][AG]TTNC-3' motif present in the MEF3 element in the MYOG promoter and CIDEA enhancer. Regulates the expression of numerous genes, including MYC, CCNA1, CCND1 and EZR. Acts as an activator of the IGFBP5 promoter, probably coactivated by EYA2. Repression of precursor cell proliferation in myoblasts is switched to activation through recruitment of EYA3 to the SIX1-DACH1 complex. During myogenesis, seems to act together with EYA2 and DACH2. Regulates the expression of CCNA1. Promotes brown adipocyte differentiation. This chain is Homeobox protein SIX1 (SIX1), found in Lagothrix lagotricha (Brown woolly monkey).